A 346-amino-acid polypeptide reads, in one-letter code: Biotin synthase (346 aa).

Residues 38–256 form the Radical SAM core domain; it reads QQVQVSTLLS…IAVARIMMPT (219 aa). The [4Fe-4S] cluster site is built by Cys-53, Cys-57, and Cys-60. Cys-97, Cys-128, Cys-188, and Arg-260 together coordinate [2Fe-2S] cluster.

It belongs to the radical SAM superfamily. Biotin synthase family. As to quaternary structure, homodimer. Requires [4Fe-4S] cluster as cofactor. [2Fe-2S] cluster is required as a cofactor.

The catalysed reaction is (4R,5S)-dethiobiotin + (sulfur carrier)-SH + 2 reduced [2Fe-2S]-[ferredoxin] + 2 S-adenosyl-L-methionine = (sulfur carrier)-H + biotin + 2 5'-deoxyadenosine + 2 L-methionine + 2 oxidized [2Fe-2S]-[ferredoxin]. It participates in cofactor biosynthesis; biotin biosynthesis; biotin from 7,8-diaminononanoate: step 2/2. Functionally, catalyzes the conversion of dethiobiotin (DTB) to biotin by the insertion of a sulfur atom into dethiobiotin via a radical-based mechanism. The protein is Biotin synthase of Salmonella choleraesuis (strain SC-B67).